A 158-amino-acid polypeptide reads, in one-letter code: Sorbin and SH3 domain-containing protein 2 (158 aa).

Residues 1 to 46 enclose the SoHo domain; the sequence is MRAATPLQTVDRPKDWYKTMFKQIHMVHKPDDDTDMYNTPYTYNAG. The disordered stretch occupies residues 28–158; that stretch reads HKPDDDTDMY…TKPQAGRRKV (131 aa). Positions 50–66 are enriched in polar residues; the sequence is SPYSAQSHPAAKTQTYR. Residues 71-81 show a composition bias toward basic and acidic residues; sequence SHSDNGTDAFK. Residue Ser-73 is modified to Phosphoserine. A compositionally biased stretch (pro residues) spans 86 to 99; it reads PVPPPHVPPPVPPL. A compositionally biased stretch (basic and acidic residues) spans 100 to 136; it reads RPRDRSSTEKHDWDPPDRKVDTRKFRSEPRSIFEYEP. Alanine amide is present on Ala-153.

Interacts with ABL1/c-Abl, ABL2/v-Abl/Arg, ACTN, AKT1, CBL, PALLD and PAK1. Interacts with ABL, CBL, DNM1, DNM2, FLOT1, AFDN, PTK2B/PYK2, SAPAP, SPTAN1, SYNJ1, SYNJ2, VCL/vinculin, and WASF. Interacts with PTPN12 and WASF1 via its SH3 domains; this interaction may mediate the partial PTPN12 and WASF1 translocation to focal adhesion sites. Post-translationally, ubiquitinated by CBL. Dephosphorylated by PTPN12. As to expression, expressed in duodenum.

The protein localises to the cytoplasm. The protein resides in the perinuclear region. It localises to the apical cell membrane. It is found in the cell junction. Its subcellular location is the focal adhesion. The protein localises to the cell projection. The protein resides in the lamellipodium. Its function is as follows. Adapter protein that plays a role in the assembling of signaling complexes, being a link between ABL kinases and actin cytoskeleton. Can form complex with ABL1 and CBL, thus promoting ubiquitination and degradation of ABL1 or with AKT1 and PAK1, thus mediating AKT1-mediated activation of PAK1. May play a role in the regulation of pancreatic cell adhesion, possibly by acting on WASF1 phosphorylation, enhancing phosphorylation by ABL1, as well as dephosphorylation by PTPN12. Increases water and sodium absorption in the intestine and gall-bladder. In Sus scrofa (Pig), this protein is Sorbin and SH3 domain-containing protein 2 (SORBS2).